We begin with the raw amino-acid sequence, 226 residues long: Transcription factor bHLH115 (226 aa).

In terms of domain architecture, bHLH spans 66–117 (TGSNSKACREKQRRDRLNDKFTELSSVLEPGRTPKTDKVAIINDAIRMVNQA).

Homodimer. Interacts with BTS and BHLH47/PYE.

It is found in the nucleus. In Arabidopsis thaliana (Mouse-ear cress), this protein is Transcription factor bHLH115 (BHLH115).